The primary structure comprises 446 residues: Thymidine phosphorylase (446 aa).

Belongs to the thymidine/pyrimidine-nucleoside phosphorylase family. In terms of assembly, homodimer.

The catalysed reaction is thymidine + phosphate = 2-deoxy-alpha-D-ribose 1-phosphate + thymine. The protein operates within pyrimidine metabolism; dTMP biosynthesis via salvage pathway; dTMP from thymine: step 1/2. The enzymes which catalyze the reversible phosphorolysis of pyrimidine nucleosides are involved in the degradation of these compounds and in their utilization as carbon and energy sources, or in the rescue of pyrimidine bases for nucleotide synthesis. The protein is Thymidine phosphorylase of Psychromonas ingrahamii (strain DSM 17664 / CCUG 51855 / 37).